The chain runs to 950 residues: MAFANFRRILRLPNFEKKRLREYEHVRRDVDPNQVWEIIGELGDGAFGKVYKAKNRETGILAAAKVIETKNEEELEDYMVEIEILATCNHHFIVKLLGAFYWEGKLWIMIEFCPGGAVDAVMLELDRGLKEPEIKTICRQMLEALAYLHSMKIIHRDLKAGNVLLTLDGDIKLADFGVSAKNVKTLQRRDSFIGTPYWMAPEVVMCETMKDAPYDYKADIWSLGITLIEMAQIEPPHHELNPMRVLLKIAKSEPPTLSSLSKWSPEFHSFLKTALDKNPETRPSAAQLLEHPFVKKASGNKPLRDLVAEAKAEVLDEIEEQGEAEEEEDSDMLSPKTKGVSQSTHVEIGKDIEREQVGNGIKPHSATSPQKTDSQADNYSQRRNNEVKNCPENGRPDAVNGKPDIIILNPLSSNLEPKRNSTAESYRGEEHSSASSQRQRSAQSAELVPNGSFDSPTRYFTNWSKRDSDSGSNSASESMDISMNLSADLSMNKETGFLSHRENRLHKKTLKRTRRFVVDGVEVSITTSKIIGDDEKKDEEMRFLRRQELRELRLLQKEEHRHQAQLTSKHSFQLEQMSRRFEQEMNSKRKFYDTELETLERHQKQQIVWMEQEHAFRRRDEAKHIKTEQERDHIKFLEQLKLRKKELKAHVEKLPRQQRRETMKVQMDGFAHKKQTEEQQFVNRQKEDLNLAMRVIVLENRKEIYNKEREFLNKKQQLLRDRESVIWELEERHLQERHQLVKQQLKDQYFLQRHELLRKHEKEQEQMQRYNQRMMEQLRLRQQQEKVRLPKNQKAEAKTRMTMFKKSLHISPSGSAAEQRDKIKQFSLQEEKRQKAERLQQQQKHEHQLMEMLAECDCNVRDLLQMQNEKCHLLVEHETQKLKSLDEHHIQLIREWRENIRPRKKAFEDELELKKEAQEMFFRLNEEVAGDPFLSNKPTRFYSFSSPEAS.

The Protein kinase domain occupies 36-294; that stretch reads WEIIGELGDG…AAQLLEHPFV (259 aa). ATP is bound by residues 42–50 and K65; that span reads LGDGAFGKV. The active-site Proton acceptor is D157. Residues 319 to 331 show a composition bias toward acidic residues; sequence EEQGEAEEEEDSD. The segment at 319-478 is disordered; the sequence is EEQGEAEEEE…DSGSNSASES (160 aa). Residues 347–356 show a composition bias toward basic and acidic residues; the sequence is EIGKDIEREQ. Positions 365–382 are enriched in polar residues; sequence SATSPQKTDSQADNYSQR. Residues 416–432 show a composition bias toward basic and acidic residues; that stretch reads EPKRNSTAESYRGEEHS. Positions 433–445 are enriched in low complexity; that stretch reads SASSQRQRSAQSA. Over residues 452 to 463 the composition is skewed to polar residues; it reads SFDSPTRYFTNW. Residues S482, S486, and S490 each carry the phosphoserine; by PLK1 modification. A coiled-coil region spans residues 634–786; it reads IKFLEQLKLR…QLRLRQQQEK (153 aa).

The protein belongs to the protein kinase superfamily. STE Ser/Thr protein kinase family. STE20 subfamily. Homodimer. Post-translationally, autophosphorylates. Phosphorylated by plk1/plx1, suggesting the existence of a feedback loop with plk1/plx1. activation of the protein.

It localises to the cell membrane. The catalysed reaction is L-seryl-[protein] + ATP = O-phospho-L-seryl-[protein] + ADP + H(+). The enzyme catalyses L-threonyl-[protein] + ATP = O-phospho-L-threonyl-[protein] + ADP + H(+). Its function is as follows. May act as a polo kinase kinase by mediating phosphorylation of plk1/plx1 and subsequent activation of plk1/plx1 during oocyte maturation. The chain is Serine/threonine-protein kinase 10-A (stk10-a) from Xenopus laevis (African clawed frog).